We begin with the raw amino-acid sequence, 196 residues long: Probable thymidylate kinase (196 aa).

9–16 (GIDGSGKT) lines the ATP pocket.

It belongs to the thymidylate kinase family.

The enzyme catalyses dTMP + ATP = dTDP + ADP. The protein is Probable thymidylate kinase of Methanococcus aeolicus (strain ATCC BAA-1280 / DSM 17508 / OCM 812 / Nankai-3).